Consider the following 486-residue polypeptide: Membrane-bound lytic murein transglycosylase F (486 aa).

The N-terminal stretch at 1–28 (MFAHTLFRKRCAIWLLAIGIFLMLGSCA) is a signal peptide. The segment at 29–267 (EKPSELERIK…RLRERYYGHV (239 aa)) is non-LT domain. The LT domain stretch occupies residues 268-486 (DVLGYVGAYA…TDLMEELPPL (219 aa)). Glutamate 314 is a catalytic residue.

It in the N-terminal section; belongs to the bacterial solute-binding protein 3 family. The protein in the C-terminal section; belongs to the transglycosylase Slt family.

It localises to the cell outer membrane. It catalyses the reaction Exolytic cleavage of the (1-&gt;4)-beta-glycosidic linkage between N-acetylmuramic acid (MurNAc) and N-acetylglucosamine (GlcNAc) residues in peptidoglycan, from either the reducing or the non-reducing ends of the peptidoglycan chains, with concomitant formation of a 1,6-anhydrobond in the MurNAc residue.. In terms of biological role, murein-degrading enzyme that degrades murein glycan strands and insoluble, high-molecular weight murein sacculi, with the concomitant formation of a 1,6-anhydromuramoyl product. Lytic transglycosylases (LTs) play an integral role in the metabolism of the peptidoglycan (PG) sacculus. Their lytic action creates space within the PG sacculus to allow for its expansion as well as for the insertion of various structures such as secretion systems and flagella. The polypeptide is Membrane-bound lytic murein transglycosylase F (Stutzerimonas stutzeri (strain A1501) (Pseudomonas stutzeri)).